Here is a 402-residue protein sequence, read N- to C-terminus: Palmitoyltransferase PFA4 (402 aa).

Over methionine 1–proline 8 the chain is Cytoplasmic. A helical transmembrane segment spans residues isoleucine 9–phenylalanine 29. The Lumenal portion of the chain corresponds to valine 30–glutamate 39. The helical transmembrane segment at glutamine 40–valine 60 threads the bilayer. The Cytoplasmic segment spans residues aspartate 61–arginine 125. Residues arginine 78–phenylalanine 128 form the DHHC domain. The active-site S-palmitoyl cysteine intermediate is the cysteine 108. Residues phenylalanine 126 to leucine 146 form a helical membrane-spanning segment. The Lumenal portion of the chain corresponds to histidine 147–cysteine 165. A helical transmembrane segment spans residues alanine 166 to valine 186. Residues arginine 187–asparagine 402 lie on the Cytoplasmic side of the membrane.

This sequence belongs to the DHHC palmitoyltransferase family. PFA4 subfamily.

It localises to the endoplasmic reticulum membrane. It carries out the reaction L-cysteinyl-[protein] + hexadecanoyl-CoA = S-hexadecanoyl-L-cysteinyl-[protein] + CoA. Its function is as follows. Mediates the reversible addition of palmitate to target proteins, thereby regulating their membrane association and biological function. This chain is Palmitoyltransferase PFA4, found in Debaryomyces hansenii (strain ATCC 36239 / CBS 767 / BCRC 21394 / JCM 1990 / NBRC 0083 / IGC 2968) (Yeast).